The sequence spans 606 residues: NADH-ubiquinone oxidoreductase chain 5 (606 aa).

16 helical membrane-spanning segments follow: residues 1–21 (MNLFTSFTLLTLLILTTPIMM), 35–55 (YVKNIVFCAFITSLVPAMVYL), 87–107 (LMFMPVALFITWSIMEFSMWY), 114–134 (INQFFKYLLLFLITMLILVTA), 140–160 (LFIGWEGVGIMSFLLIGWWFG), 171–191 (AILYNRIGDIGLLASMAWFLS), 211–233 (FPLMGLVLAAAGKSAQFGLHPWL), 241–261 (TPVSALLHSSTMVVAGIFLLV), 272–292 (LIQTVTLCLGAITTLFTAICA), 301–320 (IIAFSTSSQLGLMMVTIGLN), 325–347 (AFLHICTHAFFKAMLFLCSGSII), 366–386 (LPFTTTALIIGCLALTGMPFL), 413–433 (LIATSLTAVYSTRIIFFALLG), 457–477 (LLVGSIFAGFILSNSIPPMTT), 482–502 (MPLHLKLTALAMTTLGFIIAF), and 582–602 (GLIKLYFLSFLITITLSMILF).

Belongs to the complex I subunit 5 family. Core subunit of respiratory chain NADH dehydrogenase (Complex I) which is composed of 45 different subunits.

Its subcellular location is the mitochondrion inner membrane. It catalyses the reaction a ubiquinone + NADH + 5 H(+)(in) = a ubiquinol + NAD(+) + 4 H(+)(out). Functionally, core subunit of the mitochondrial membrane respiratory chain NADH dehydrogenase (Complex I) which catalyzes electron transfer from NADH through the respiratory chain, using ubiquinone as an electron acceptor. Essential for the catalytic activity and assembly of complex I. This Balaenoptera physalus (Fin whale) protein is NADH-ubiquinone oxidoreductase chain 5 (MT-ND5).